Consider the following 320-residue polypeptide: Acyl-coenzyme A thioesterase 8 (320 aa).

Residues Asp-233, Ser-255, and Gln-305 each act as charge relay system in the active site. The short motif at 318 to 320 (SKL) is the Microbody targeting signal element.

It belongs to the C/M/P thioester hydrolase family. Homodimer.

It localises to the peroxisome matrix. The enzyme catalyses choloyl-CoA + H2O = cholate + CoA + H(+). It catalyses the reaction chenodeoxycholoyl-CoA + H2O = chenodeoxycholate + CoA + H(+). It carries out the reaction acetyl-CoA + H2O = acetate + CoA + H(+). The catalysed reaction is butanoyl-CoA + H2O = butanoate + CoA + H(+). The enzyme catalyses hexanoyl-CoA + H2O = hexanoate + CoA + H(+). It catalyses the reaction octanoyl-CoA + H2O = octanoate + CoA + H(+). It carries out the reaction decanoyl-CoA + H2O = decanoate + CoA + H(+). The catalysed reaction is dodecanoyl-CoA + H2O = dodecanoate + CoA + H(+). The enzyme catalyses tetradecanoyl-CoA + H2O = tetradecanoate + CoA + H(+). It catalyses the reaction 4,8-dimethylnonanoyl-CoA + H2O = 4,8-dimethylnonanoate + CoA + H(+). It carries out the reaction 2,6-dimethylheptanoyl-CoA + H2O = 2,6-dimethylheptanoate + CoA + H(+). The catalysed reaction is malonyl-CoA + H2O = malonate + CoA + H(+). The enzyme catalyses acetoacetyl-CoA + H2O = acetoacetate + CoA + H(+). It catalyses the reaction propanoyl-CoA + H2O = propanoate + CoA + H(+). It carries out the reaction succinyl-CoA + H2O = succinate + CoA + H(+). The catalysed reaction is glutaryl-CoA + H2O = glutarate + CoA + H(+). The enzyme catalyses hexanedioyl-CoA + H2O = hexanedioate + CoA + H(+). It catalyses the reaction octanedioyl-CoA + H2O = octanedioate + CoA + H(+). It carries out the reaction decanedioyl-CoA + H2O = decanedioate + CoA + H(+). The catalysed reaction is dodecanedioyl-CoA + H2O = dodecanedioate + CoA + H(+). The enzyme catalyses (9Z)-tetradecenoyl-CoA + H2O = (9Z)-tetradecenoate + CoA + H(+). It catalyses the reaction hexadecanoyl-CoA + H2O = hexadecanoate + CoA + H(+). It carries out the reaction (9Z)-hexadecenoyl-CoA + H2O = (9Z)-hexadecenoate + CoA + H(+). The catalysed reaction is octadecanoyl-CoA + H2O = octadecanoate + CoA + H(+). The enzyme catalyses (9Z)-octadecenoyl-CoA + H2O = (9Z)-octadecenoate + CoA + H(+). It catalyses the reaction (9Z,12Z)-octadecadienoyl-CoA + H2O = (9Z,12Z)-octadecadienoate + CoA + H(+). It carries out the reaction eicosanoyl-CoA + H2O = eicosanoate + CoA + H(+). The catalysed reaction is (5Z,8Z,11Z,14Z)-eicosatetraenoyl-CoA + H2O = (5Z,8Z,11Z,14Z)-eicosatetraenoate + CoA + H(+). The enzyme catalyses (3S)-3-hydroxy-3-methylglutaryl-CoA + H2O = 3-hydroxy-3-methylglutarate + CoA + H(+). It catalyses the reaction 3alpha,7alpha,12alpha-trihydroxy-5beta-cholestan-26-oyl-CoA + H2O = 3alpha,7alpha,12alpha-trihydroxy-5beta-cholestan-26-oate + CoA + H(+). It carries out the reaction 2-methyloctadecanoyl-CoA + H2O = 2-methyloctadecanoate + CoA + H(+). The catalysed reaction is prostaglandin F2alpha-CoA + H2O = prostaglandin F2alpha + CoA + H(+). With respect to regulation, inhibited by CoASH (IC(50)=10-15 uM). Also inhibited by cysteine-reactive agents. Its function is as follows. Catalyzes the hydrolysis of acyl-CoAs into free fatty acids and coenzyme A (CoASH), regulating their respective intracellular levels. Displays no strong substrate specificity with respect to the carboxylic acid moiety of Acyl-CoAs. Hydrolyzes medium length (C2 to C20) straight-chain, saturated and unsaturated acyl-CoAS but is inactive towards substrates with longer aliphatic chains. Moreover, it catalyzes the hydrolysis of CoA esters of bile acids, such as choloyl-CoA and chenodeoxycholoyl-CoA and competes with bile acid CoA:amino acid N-acyltransferase (BAAT). Is also able to hydrolyze CoA esters of dicarboxylic acids. It is involved in the metabolic regulation of peroxisome proliferation. This is Acyl-coenzyme A thioesterase 8 (Acot8) from Rattus norvegicus (Rat).